The chain runs to 148 residues: Deoxyuridine 5'-triphosphate nucleotidohydrolase (148 aa).

Residues arginine 67 to glycine 69, asparagine 80, leucine 84 to aspartate 86, and methionine 94 each bind substrate.

This sequence belongs to the dUTPase family. Requires Mg(2+) as cofactor.

It carries out the reaction dUTP + H2O = dUMP + diphosphate + H(+). It participates in pyrimidine metabolism; dUMP biosynthesis; dUMP from dCTP (dUTP route): step 2/2. This enzyme is involved in nucleotide metabolism: it produces dUMP, the immediate precursor of thymidine nucleotides and it decreases the intracellular concentration of dUTP so that uracil cannot be incorporated into DNA. This is Deoxyuridine 5'-triphosphate nucleotidohydrolase from Burkholderia cenocepacia (strain HI2424).